Reading from the N-terminus, the 104-residue chain is Large ribosomal subunit protein uL24 (104 aa).

The protein belongs to the universal ribosomal protein uL24 family. Part of the 50S ribosomal subunit.

One of two assembly initiator proteins, it binds directly to the 5'-end of the 23S rRNA, where it nucleates assembly of the 50S subunit. Its function is as follows. One of the proteins that surrounds the polypeptide exit tunnel on the outside of the subunit. The chain is Large ribosomal subunit protein uL24 from Salmonella paratyphi A (strain ATCC 9150 / SARB42).